The chain runs to 260 residues: Thiamine thiazole synthase (260 aa).

NAD(+) contacts are provided by residues A36, 55–56, G63, and 154–156; these read EQ and HVD. Fe cation-binding residues include D156 and H171. Residue M224 participates in NAD(+) binding. R234 contacts glycine.

It belongs to the THI4 family. Homooctamer; tetramer of dimers. Fe(2+) serves as cofactor.

It carries out the reaction hydrogen sulfide + glycine + NAD(+) = ADP-5-ethyl-4-methylthiazole-2-carboxylate + nicotinamide + 3 H2O + H(+). It functions in the pathway cofactor biosynthesis; thiamine diphosphate biosynthesis. Functionally, involved in the biosynthesis of the thiazole moiety of thiamine. Catalyzes the conversion of NAD and glycine to adenosine diphosphate 5-(2-hydroxyethyl)-4-methylthiazole-2-carboxylate (ADT), an adenylated thiazole intermediate, using free sulfide as a source of sulfur. This is Thiamine thiazole synthase from Methanosarcina barkeri (strain Fusaro / DSM 804).